We begin with the raw amino-acid sequence, 1382 residues long: DNA-directed RNA polymerase subunit beta' (1382 aa).

Zn(2+) is bound by residues Cys70, Cys72, Cys85, and Cys88. Mg(2+)-binding residues include Asp460, Asp462, and Asp464. Positions 808, 882, 889, and 892 each coordinate Zn(2+).

This sequence belongs to the RNA polymerase beta' chain family. As to quaternary structure, the RNAP catalytic core consists of 2 alpha, 1 beta, 1 beta' and 1 omega subunit. When a sigma factor is associated with the core the holoenzyme is formed, which can initiate transcription. Mg(2+) is required as a cofactor. It depends on Zn(2+) as a cofactor.

It catalyses the reaction RNA(n) + a ribonucleoside 5'-triphosphate = RNA(n+1) + diphosphate. Functionally, DNA-dependent RNA polymerase catalyzes the transcription of DNA into RNA using the four ribonucleoside triphosphates as substrates. This chain is DNA-directed RNA polymerase subunit beta', found in Citrifermentans bemidjiense (strain ATCC BAA-1014 / DSM 16622 / JCM 12645 / Bem) (Geobacter bemidjiensis).